The primary structure comprises 603 residues: Glutathione-regulated potassium-efflux system protein KefB (603 aa).

The next 13 membrane-spanning stretches (helical) occupy residues 5–25, 29–49, 55–75, 87–107, 115–135, 152–172, 180–202, 207–227, 230–250, 268–288, 291–311, 326–346, and 356–376; these read ALLT…PIAA, IGAV…GLGF, AILH…GLEL, IFGV…GALY, SALI…LQLM, VLLF…ILAG, WERI…YLVR, FIAA…LVLG, LFME…GILL, GLLL…GILY, IVKI…VLYF, FAGV…AAAS, and PLLL…MQLI. The RCK N-terminal domain occupies 400 to 521; that stretch reads EPQVIVVGFG…VRHFSRETFS (122 aa).

This sequence belongs to the monovalent cation:proton antiporter 2 (CPA2) transporter (TC 2.A.37) family. KefB subfamily. In terms of assembly, interacts with the regulatory subunit KefG.

It is found in the cell inner membrane. Pore-forming subunit of a potassium efflux system that confers protection against electrophiles. Catalyzes K(+)/H(+) antiport. The sequence is that of Glutathione-regulated potassium-efflux system protein KefB from Pectobacterium carotovorum subsp. carotovorum (strain PC1).